Here is a 231-residue protein sequence, read N- to C-terminus: Cytochrome c oxidase subunit 2 (231 aa).

Over 1 to 30 the chain is Mitochondrial intermembrane; that stretch reads MNNFFQGYNLLFQHSLFASYMDWFHSFNCS. The helical transmembrane segment at 31–52 threads the bilayer; that stretch reads LLLGVLVFVTLLFGYLIFGTFY. At 53-69 the chain is on the mitochondrial matrix side; it reads FKSKKIEYQFGELLCSI. The helical transmembrane segment at 70 to 89 threads the bilayer; it reads FPTIILLMQMVPSLSLLYYY. At 90–231 the chain is on the mitochondrial intermembrane side; sequence GLMNLDSNLT…FKSWCFGTME (142 aa). Histidine 164, cysteine 199, glutamate 201, cysteine 203, histidine 207, and methionine 210 together coordinate Cu cation. Glutamate 201 contributes to the Mg(2+) binding site.

Belongs to the cytochrome c oxidase subunit 2 family. As to quaternary structure, component of the cytochrome c oxidase (complex IV, CIV), a multisubunit enzyme composed of a catalytic core of 3 subunits and several supernumerary subunits. The complex exists as a monomer or a dimer and forms supercomplexes (SCs) in the inner mitochondrial membrane with ubiquinol-cytochrome c oxidoreductase (cytochrome b-c1 complex, complex III, CIII). It depends on Cu cation as a cofactor.

It is found in the mitochondrion inner membrane. It catalyses the reaction 4 Fe(II)-[cytochrome c] + O2 + 8 H(+)(in) = 4 Fe(III)-[cytochrome c] + 2 H2O + 4 H(+)(out). Component of the cytochrome c oxidase, the last enzyme in the mitochondrial electron transport chain which drives oxidative phosphorylation. The respiratory chain contains 3 multisubunit complexes succinate dehydrogenase (complex II, CII), ubiquinol-cytochrome c oxidoreductase (cytochrome b-c1 complex, complex III, CIII) and cytochrome c oxidase (complex IV, CIV), that cooperate to transfer electrons derived from NADH and succinate to molecular oxygen, creating an electrochemical gradient over the inner membrane that drives transmembrane transport and the ATP synthase. Cytochrome c oxidase is the component of the respiratory chain that catalyzes the reduction of oxygen to water. Electrons originating from reduced cytochrome c in the intermembrane space (IMS) are transferred via the dinuclear copper A center (CU(A)) of subunit 2 and heme A of subunit 1 to the active site in subunit 1, a binuclear center (BNC) formed by heme A3 and copper B (CU(B)). The BNC reduces molecular oxygen to 2 water molecules using 4 electrons from cytochrome c in the IMS and 4 protons from the mitochondrial matrix. The protein is Cytochrome c oxidase subunit 2 of Caenorhabditis elegans.